The sequence spans 247 residues: tRNA (guanine-N(7)-)-methyltransferase (247 aa).

Residues Gly-70, 93–94 (EI), 128–129 (NA), and Leu-148 each bind S-adenosyl-L-methionine. Asp-151 is a catalytic residue. 226–228 (SEE) serves as a coordination point for S-adenosyl-L-methionine.

Belongs to the class I-like SAM-binding methyltransferase superfamily. TrmB family.

The protein resides in the nucleus. The catalysed reaction is guanosine(46) in tRNA + S-adenosyl-L-methionine = N(7)-methylguanosine(46) in tRNA + S-adenosyl-L-homocysteine. Its pathway is tRNA modification; N(7)-methylguanine-tRNA biosynthesis. Functionally, catalyzes the formation of N(7)-methylguanine at position 46 (m7G46) in tRNA. This Drosophila persimilis (Fruit fly) protein is tRNA (guanine-N(7)-)-methyltransferase.